Reading from the N-terminus, the 58-residue chain is Large ribosomal subunit protein bL32 (58 aa).

It belongs to the bacterial ribosomal protein bL32 family.

The chain is Large ribosomal subunit protein bL32 from Prochlorococcus marinus (strain MIT 9515).